We begin with the raw amino-acid sequence, 418 residues long: MEKTQSVFIRFIVNGSLVKQILIGLVAGIVLALVSTPAAIAVGLLGSLFVGALKAVAPVLVLMLVIASIANHKKGQKTSIRPILFLYVLGTFSAALVAVVVSFIYPSTLILVAESADITPPSGIVEVLHGLLNSIIANPIHALLNANYIGILAWAVGLGIALRHAADTTKALINDMSDAVTLVVRVVIRFAPLGIFGLVASTIAATGFGALQLYAQLLVVLIGCMLLVALVVNPLIVYWKIRRNPYPLVFACLRESGVTAFFTRSSAANIPVNMEMCKKMNLNEDTYSISIPLGATINMAGAAITITVLTLAAVHTLGITVDLPTALLLSVVAAICACGASGVAGGSLLLIPLACSMFGIPNDVAMQVVGVGFIIGVLQDSAETALNSSTDVLFTAAVCQAEDAKLANPDPLAAGKSV.

Helical transmembrane passes span 21 to 41 (ILIGLVAGIVLALVSTPAAIA), 49 to 69 (FVGALKAVAPVLVLMLVIASI), 83 to 103 (ILFLYVLGTFSAALVAVVVSF), 142 to 162 (ALLNANYIGILAWAVGLGIAL), 190 to 210 (FAPLGIFGLVASTIAATGFGA), 217 to 237 (LLVVLIGCMLLVALVVNPLIV), 299 to 319 (MAGAAITITVLTLAAVHTLGI), and 331 to 351 (VVAAICACGASGVAGGSLLLI).

The protein belongs to the dicarboxylate/amino acid:cation symporter (DAACS) (TC 2.A.23) family.

The protein localises to the cell inner membrane. The catalysed reaction is L-serine(in) + Na(+)(in) = L-serine(out) + Na(+)(out). The enzyme catalyses L-threonine(in) + Na(+)(in) = L-threonine(out) + Na(+)(out). Its function is as follows. Involved in the import of serine and threonine into the cell, with the concomitant import of sodium (symport system). In Yersinia pestis bv. Antiqua (strain Antiqua), this protein is Serine/threonine transporter SstT.